The sequence spans 601 residues: Probable cytochrome P450 525A1 (601 aa).

Residues 12–32 form a helical membrane-spanning segment; that stretch reads ISYFLTCSIFGFILWILTEQI. Residues 205–253 are disordered; the sequence is NNNNNNNNNNNNNNNNNNNNNNNNNNNNNNNNNNNNNNNNNNNNNNNNN. Residue Cys-544 participates in heme binding.

Belongs to the cytochrome P450 family. Heme serves as cofactor.

The protein localises to the membrane. The chain is Probable cytochrome P450 525A1 (cyp525A1) from Dictyostelium discoideum (Social amoeba).